We begin with the raw amino-acid sequence, 346 residues long: tRNA pseudouridine synthase D (346 aa).

Asp-81 (nucleophile) is an active-site residue. The TRUD domain maps to 157–303; sequence GVPNYFGLQR…MKHERRILRL (147 aa).

It belongs to the pseudouridine synthase TruD family.

It carries out the reaction uridine(13) in tRNA = pseudouridine(13) in tRNA. Responsible for synthesis of pseudouridine from uracil-13 in transfer RNAs. This is tRNA pseudouridine synthase D from Stutzerimonas stutzeri (strain A1501) (Pseudomonas stutzeri).